A 363-amino-acid polypeptide reads, in one-letter code: Trichothecene biosynthesis protein 14 (363 aa).

This sequence belongs to the TRI14 family.

In terms of biological role, part of the gene cluster that mediates the production of the antimicrobial trichothecene harzianum A (HA) that plays a role in Botrytis cinerea antagonistic activity and plant defense priming. The biosynthesis of harzianum A begins with the cyclization of farnesyl diphosphate to trichodiene and is catalyzed by the trichodiene synthase TRI5. Trichodiene undergoes a series of oxygenations catalyzed by the cytochrome P450 monooxygenase TRI4. TRI4 controls the addition of 3 oxygens at C-2, C-11, and the C-12, C-13-epoxide to form the intermediate isotrichodiol. Isotrichodiol then undergoes a non-enzymatic isomerization and cyclization to form 12,13-epoxytrichothec-9-ene (EPT) which is further converted to trichodermol by the cytochrome P450 monooxygenase TRI11 via C-4 hydroxylation. The last step of HA synthesis is esterification of an octatriendioyl moiety to the C-4 oxygen of trichodermol. The octatriendioyl moiety is probably produced by the polyketide synthase TRI17 and the esterification performed by the trichothecene O-acetyltransferase TRI3. The polypeptide is Trichothecene biosynthesis protein 14 (Trichoderma arundinaceum).